We begin with the raw amino-acid sequence, 49 residues long: uncharacterized protein (49 aa).

This sequence belongs to the metallo-dependent hydrolases superfamily. TatD-type hydrolase family. The cofactor is a divalent metal cation.

This is an uncharacterized protein from Geobacillus stearothermophilus (Bacillus stearothermophilus).